Consider the following 300-residue polypeptide: Protoheme IX farnesyltransferase (300 aa).

8 helical membrane passes run Val-24–Val-44, Trp-46–Ile-66, Pro-94–Phe-114, Leu-118–Leu-138, Ile-146–Gly-166, Ala-172–Leu-192, Val-224–Leu-244, and Ile-278–Leu-298.

It belongs to the UbiA prenyltransferase family. Protoheme IX farnesyltransferase subfamily.

Its subcellular location is the cell inner membrane. The enzyme catalyses heme b + (2E,6E)-farnesyl diphosphate + H2O = Fe(II)-heme o + diphosphate. It functions in the pathway porphyrin-containing compound metabolism; heme O biosynthesis; heme O from protoheme: step 1/1. In terms of biological role, converts heme B (protoheme IX) to heme O by substitution of the vinyl group on carbon 2 of heme B porphyrin ring with a hydroxyethyl farnesyl side group. The polypeptide is Protoheme IX farnesyltransferase (Burkholderia ambifaria (strain ATCC BAA-244 / DSM 16087 / CCUG 44356 / LMG 19182 / AMMD) (Burkholderia cepacia (strain AMMD))).